The sequence spans 130 residues: Cystatin domain-containing protein 1 (130 aa).

Positions 1–23 (MSWKVPMLVGLVVLGTHIWTINK) are cleaved as a signal peptide. The Cystatin domain occupies 37-116 (ASVEFAVAQF…CVFQVDARPW (80 aa)). 2 disulfides stabilise this stretch: C84–C94 and C107–C127.

The protein belongs to the cystatin family.

The protein resides in the secreted. May play a specialized role in spermatogenesis. This chain is Cystatin domain-containing protein 1, found in Rattus norvegicus (Rat).